Reading from the N-terminus, the 821-residue chain is Ent-isokaur-15-ene synthase (821 aa).

Mg(2+) contacts are provided by Asp-556, Asp-560, Asn-701, Thr-705, and Glu-709. Positions 556–560 (DDFFD) match the DDXXD motif motif.

Belongs to the terpene synthase family. Mg(2+) is required as a cofactor.

It carries out the reaction ent-copalyl diphosphate = ent-isokaurene + diphosphate. It participates in secondary metabolite biosynthesis; terpenoid biosynthesis. In terms of biological role, involved in the biosynthesis of ent-kaurene diterpenoids natural products. Catalyzes the conversion of ent-copalyl diphosphate to the phytoalexin precursor ent-isokaur-15-ene. This chain is Ent-isokaur-15-ene synthase, found in Oryza sativa subsp. indica (Rice).